A 322-amino-acid polypeptide reads, in one-letter code: Thioredoxin reductase (322 aa).

Residues 12–15, 34–42, Asn-51, and Val-84 each bind FAD; these read SGPA and EGAVTAGGA. Cys-136 and Cys-139 are joined by a disulfide. His-176, Arg-182, Ile-239, and Tyr-259 together coordinate NADP(+). FAD-binding positions include Asp-279 and 286–289; that span reads RQAI. Residue Arg-286 participates in NADP(+) binding.

Belongs to the class-II pyridine nucleotide-disulfide oxidoreductase family. As to quaternary structure, homodimer. Requires FAD as cofactor.

The protein resides in the cytoplasm. It catalyses the reaction [thioredoxin]-dithiol + NADP(+) = [thioredoxin]-disulfide + NADPH + H(+). The polypeptide is Thioredoxin reductase (Streptomyces coelicolor (strain ATCC BAA-471 / A3(2) / M145)).